The sequence spans 891 residues: Transportin-1 (891 aa).

19 HEAT repeats span residues 14-40 (GLRE…QQLQ), 45-83 (FPDF…ATFS), 92-125 (YVKS…IVRV), 131-168 (LFQA…LDVD), 178-208 (NVFM…QYIV), 221-248 (YLQG…VQLI), 260-287 (KNVT…FWSA), 303-381 (PRLI…LSNV), 389-420 (TLMP…GAIA), 432-459 (PQIV…TLSR), 477-510 (FDKI…EEEA), 518-551 (LGII…ADAV), 559-597 (KYLD…QALG), 605-653 (EPVF…GLGA), 664-695 (LRDI…RVCP), 703-740 (QEFL…IKIG), 748-784 (ITVV…WVCP), 792-825 (DHFM…VAAN), and 834-866 (TFIC…KQML). Positions 35–103 (IWQQLQHYSQ…KSELLPCIGA (69 aa)) constitute an Importin N-terminal domain. Positions 317-330 (DDDESLADAEEDES) are enriched in acidic residues. The disordered stretch occupies residues 317 to 337 (DDDESLADAEEDESFPDRDQD).

The protein belongs to the importin beta family. Importin beta-2 subfamily.

Its subcellular location is the cytoplasm. It localises to the nucleus. It is found in the nucleoplasm. Its function is as follows. Functions in nuclear protein import as nuclear transport receptor. Serves as receptor for nuclear localization signals (NLS) in cargo substrates. Is thought to mediate docking of the importin/substrate complex to the nuclear pore complex (NPC) through binding to nucleoporin and the complex is subsequently translocated through the pore by an energy requiring, Ran-dependent mechanism. At the nucleoplasmic side of the NPC, Ran binds to the importin, the importin/substrate complex dissociates and importin is re-exported from the nucleus to the cytoplasm where GTP hydrolysis releases Ran. The directionality of nuclear import is thought to be conferred by an asymmetric distribution of the GTP- and GDP-bound forms of Ran between the cytoplasm and nucleus. The chain is Transportin-1 (TRN1) from Oryza sativa subsp. japonica (Rice).